Here is a 261-residue protein sequence, read N- to C-terminus: uncharacterized protein (261 aa).

The N-terminal stretch at 1–22 (MKYYGKCISYISILILTFFIGG) is a signal peptide. Cys-23 is lipidated: N-palmitoyl cysteine. Cys-23 carries the S-diacylglycerol cysteine lipid modification.

It belongs to the staphylococcal tandem lipoprotein family.

The protein resides in the cell membrane. This is an uncharacterized protein from Staphylococcus epidermidis (strain ATCC 12228 / FDA PCI 1200).